We begin with the raw amino-acid sequence, 89 residues long: Large ribosomal subunit protein bL28 (89 aa).

The protein belongs to the bacterial ribosomal protein bL28 family.

This Chlamydia abortus (strain DSM 27085 / S26/3) (Chlamydophila abortus) protein is Large ribosomal subunit protein bL28.